The sequence spans 881 residues: Protein translocase subunit SecA (881 aa).

ATP-binding positions include Gln-83, 101–105 (GEGKT), and Asp-492.

Belongs to the SecA family.

Its subcellular location is the plastid. The protein localises to the chloroplast stroma. It is found in the chloroplast thylakoid membrane. The catalysed reaction is ATP + H2O + cellular proteinSide 1 = ADP + phosphate + cellular proteinSide 2.. In terms of biological role, has a central role in coupling the hydrolysis of ATP to the transfer of proteins across the thylakoid membrane. This Emiliania huxleyi (Coccolithophore) protein is Protein translocase subunit SecA.